A 335-amino-acid polypeptide reads, in one-letter code: NADH-quinone oxidoreductase subunit H (335 aa).

The next 8 membrane-spanning stretches (helical) occupy residues 12-32 (IIAV…GALL), 81-101 (VIFT…FAVI), 114-134 (IGLL…LFAG), 154-174 (VSYE…VGSF), 187-207 (LWFI…GVAV), 238-258 (FFVG…TLFF), 270-290 (SLAF…FILL), and 307-327 (WKFC…IVLL).

This sequence belongs to the complex I subunit 1 family. As to quaternary structure, NDH-1 is composed of 13 different subunits. Subunits NuoA, H, J, K, L, M, N constitute the membrane sector of the complex.

Its subcellular location is the cell inner membrane. The catalysed reaction is a quinone + NADH + 5 H(+)(in) = a quinol + NAD(+) + 4 H(+)(out). Its function is as follows. NDH-1 shuttles electrons from NADH, via FMN and iron-sulfur (Fe-S) centers, to quinones in the respiratory chain. The immediate electron acceptor for the enzyme in this species is believed to be ubiquinone. Couples the redox reaction to proton translocation (for every two electrons transferred, four hydrogen ions are translocated across the cytoplasmic membrane), and thus conserves the redox energy in a proton gradient. This subunit may bind ubiquinone. The chain is NADH-quinone oxidoreductase subunit H from Pseudomonas syringae pv. tomato (strain ATCC BAA-871 / DC3000).